A 356-amino-acid polypeptide reads, in one-letter code: tRNA-specific 2-thiouridylase MnmA 1 (356 aa).

ATP is bound by residues 8–15 and M34; that span reads GMSGGVDS. The Nucleophile role is filled by C103. A disulfide bridge connects residues C103 and C199. Residue G127 participates in ATP binding. The interaction with tRNA stretch occupies residues 149–151; that stretch reads KDQ. Residue C199 is the Cysteine persulfide intermediate of the active site. An interaction with tRNA region spans residues 305–306; it reads RY.

The protein belongs to the MnmA/TRMU family.

It localises to the cytoplasm. It carries out the reaction S-sulfanyl-L-cysteinyl-[protein] + uridine(34) in tRNA + AH2 + ATP = 2-thiouridine(34) in tRNA + L-cysteinyl-[protein] + A + AMP + diphosphate + H(+). Catalyzes the 2-thiolation of uridine at the wobble position (U34) of tRNA, leading to the formation of s(2)U34. The polypeptide is tRNA-specific 2-thiouridylase MnmA 1 (Clostridium botulinum (strain Langeland / NCTC 10281 / Type F)).